A 506-amino-acid chain; its full sequence is GPI mannosyltransferase 3 (506 aa).

N-linked (GlcNAc...) asparagine glycosylation is present at Asn-115. Transmembrane regions (helical) follow at residues Ala-180 to Trp-200, Tyr-229 to Ala-249, Phe-257 to Tyr-277, Tyr-285 to Met-305, Phe-330 to Ser-350, and Phe-358 to Gln-378. A glycan (N-linked (GlcNAc...) asparagine) is linked at Asn-395.

Belongs to the glycosyltransferase 22 family. PIGB subfamily.

It localises to the endoplasmic reticulum membrane. It participates in glycolipid biosynthesis; glycosylphosphatidylinositol-anchor biosynthesis. Mannosyltransferase involved in glycosylphosphatidylinositol-anchor biosynthesis. Transfers the third mannose to Man2-GlcN-acyl-PI during GPI precursor assembly. In Schizosaccharomyces pombe (strain 972 / ATCC 24843) (Fission yeast), this protein is GPI mannosyltransferase 3 (gpi10).